A 1101-amino-acid chain; its full sequence is MATPSGKAAPPNPQVSKRSLPRDASSEVPSKRKNSNPLPTLPRPSGTFVEGSIVRIAMENFLTYDICEVSPGPHLNMIIGANGTGKSSIVCAICLGLAGKPAFMGRADKVGFFVKRGCSKGLVEIELFRTSGNLIITREIDVIKNQSFWFINKKPVTQKIVEEQVAALNIQVGNLCQFLPQDKVGEFAKLSKIELLEATEKSVGPPEMHRYHCELKNFREKEKQLETSCKEKTEYLEKMVQRNERYKQDVERFYERKRHLDLIEMLEAKRPWVEYENVRQEYEGVKLIRDRVKEEVRKLKEGQIPMTRRIEEIDRQRHTLEVRIKEKSTDIKEASQKCKQRQDLIERKDRQIKELQQALTVKQNEELDRQKRISNTRKMIEDLQSELKTAENCENLQPQIDTVTNDLRRVQEEKALCEGEIIDKQREKEMLEKQRRSVSDHITRFDNLMNQKEDKLRQRYRDTYDAVLWLRNNRDRFKQRVCEPIMLTINMKDNKNAKYVENHISSNDLRAFVFESQEDMEIFLREVRDNKKLRVNAVIAPKISYADKAPSRSLNDLKQYGFFSYLRELFDAPDPVMSYLCCQYHIHEVPVGTERTRERIERVIQETRLKQIYTAEEKYVLKTSVYSNKVISSNTSLKVAQFLTVTVDLEQRRHLEEQLKEMNRQLEAVDSGLAALRDTNRHLELKDNELRLKKKELLERKTRKRQLEQKISSKLASIRLMEQDTCNLEEEERKASTKIKEINVQKAKLVTELTGLVKICTSFQIQKVDLILQNTTVISEKNKLEADYMASSSQLRVTEQQFIELDDNRQRLLQKCKELMKKARQVCNLSADQAVPQEFQTQVPTIPNGHSSSPPMAFQDLPNTLDEIDALLTEERSRASCFTGLNPSVVEEYSKREVEIQQLTEELQGKKVELDEYRENISQVKERWLNPLKELVEKINEKFSNFFSSMQCAGEVDLHTENEEDYDKYGIRIRVKFRSSTQLHELTPHHQSGGERSVSTMLYLMALQELNRCPFRVVDEINQGMDPINERRVFEMVVNTACKENTSQYFFITPKLLQNLPYSEKMTVLFVYNGPHMLEPNRWNLKAFQRRRRRITFTQPQ.

Positions 1-44 (MATPSGKAAPPNPQVSKRSLPRDASSEVPSKRKNSNPLPTLPRP) are disordered. 2 positions are modified to phosphoserine: S25 and S35. Residue 80 to 87 (GANGTGKS) participates in ATP binding. A coiled-coil region spans residues 207-440 (EMHRYHCELK…LEKQRRSVSD (234 aa)). Residues 441–644 (HITRFDNLMN…TSLKVAQFLT (204 aa)) are flexible hinge. Coiled coils occupy residues 645–753 (VTVD…VTEL), 780–828 (EKNK…QVCN), and 888–927 (SVVE…VKER).

Belongs to the SMC family. SMC5 subfamily. As to quaternary structure, forms a heterodimer with SMC6. Component of the SMC5-SMC6 complex which consists at least of SMC5, SMC6, NSMCE2, NSMCE1, NSMCE4A or EID3 and NSMCE3. Interacts with NSMCE2. Interacts with SLF2; this interaction induces an association of the SLF1-SLF2 complex with the SMC5-SMC6 complex. Interacts with RAD18; this interaction is increased in a SLF1 or SLF2-dependent manner. Post-translationally, sumoylated. Ubiquitinated. Expressed in testis but not ovary.

Its subcellular location is the nucleus. The protein localises to the chromosome. It localises to the PML body. It is found in the telomere. Functionally, core component of the SMC5-SMC6 complex, a complex involved in repair of DNA double-strand breaks by homologous recombination. The complex may promote sister chromatid homologous recombination by recruiting the SMC1-SMC3 cohesin complex to double-strand breaks. The complex is required for telomere maintenance via recombination and mediates sumoylation of shelterin complex (telosome) components. Required for sister chromatid cohesion during prometaphase and mitotic progression; the function seems to be independent of SMC6. The sequence is that of Structural maintenance of chromosomes protein 5 (Smc5) from Mus musculus (Mouse).